The following is a 1007-amino-acid chain: Sal-like protein 2 (1007 aa).

Residues 1–33 form a disordered region; sequence MSRRKQRKPQQLISDCEGPSASENGDASEEDHP. A C2H2-type 1; atypical zinc finger spans residues 34–56; sequence QVCAKCCAQFTDPTEFLAHQNAC. Disordered regions lie at residues 59–121, 137–177, 220–243, and 286–306; these read DPPV…GEES, GGGL…SGHL, PASP…PLFS, and PFSA…SPAL. Residues 70 to 80 are compositionally biased toward low complexity; that stretch reads ENPNNSSASSE. Residues 99 to 108 are compositionally biased toward polar residues; that stretch reads PPDSGSSVPT. Positions 151–171 are enriched in pro residues; the sequence is PLPPESTPAPPPPPPPPPPPG. S243 bears the Phosphoserine mark. 2 consecutive C2H2-type zinc fingers follow at residues 373 to 395 and 401 to 423; these read HKCR…LRSH and YKCN…FHRH. Disordered stretches follow at residues 520–540 and 610–629; these read KNKA…SGVA and AASG…ASSG. 3 consecutive C2H2-type zinc fingers follow at residues 631 to 653, 659 to 681, and 691 to 713; these read NQCV…YGQH, FKCK…FVGH, and NSCP…VRMH. The disordered stretch occupies residues 714–886; that stretch reads LGGQIPNGGT…SALTPEGEAT (173 aa). Over residues 734 to 744 the composition is skewed to polar residues; that stretch reads ENGSEQSTVSG. Residues 747 to 757 show a composition bias toward low complexity; it reads SFPQQQSQQPS. Residues 758 to 782 are compositionally biased toward acidic residues; that stretch reads PEEELSEEEEEEDEEEEEDVTDEDS. S797, S802, and S806 each carry phosphoserine. The segment covering 803 to 812 has biased composition (acidic residues); the sequence is EEASGAEEEV. Over residues 862–871 the composition is skewed to basic and acidic residues; that stretch reads GKEEGGKPER. K911 participates in a covalent cross-link: Glycyl lysine isopeptide (Lys-Gly) (interchain with G-Cter in ubiquitin). 2 C2H2-type zinc fingers span residues 911 to 933 and 940 to 963; these read KACE…QKTH and FTCV…LLAH.

The protein belongs to the sal C2H2-type zinc-finger protein family. As to expression, highest levels in adult brain (in different areas). Lower levels in heart; very low levels in kidney and pancreas. Expressed throughout the retina and lens vesicle as well as the periocular mesenchyme.

Its subcellular location is the nucleus. Its function is as follows. Probable transcription factor that plays a role in eye development before, during, and after optic fissure closure. The polypeptide is Sal-like protein 2 (SALL2) (Homo sapiens (Human)).